The chain runs to 204 residues: Putative F-box protein L168 (204 aa).

Positions 1–46 (MNLCDLFDEIIIGIIDELSDRDKIKFMTTCSRFYYFIDKTKYFDIY) constitute an F-box domain. A disordered region spans residues 161 to 184 (NETNKITNNHTNKKINNNKKHQNN). The span at 171–183 (TNKKINNNKKHQN) shows a compositional bias: basic residues.

The chain is Putative F-box protein L168 from Acanthamoeba polyphaga (Amoeba).